A 486-amino-acid polypeptide reads, in one-letter code: Adenosylhomocysteinase (486 aa).

Positions 63, 147, and 209 each coordinate substrate. Residue 210-212 participates in NAD(+) binding; sequence TTT. 2 residues coordinate substrate: Lys239 and Asp243. Residues Asn244, 273–278, Glu296, Asn331, 352–354, and Asn400 each bind NAD(+); these read GYGDVG and IGH.

Belongs to the adenosylhomocysteinase family. The cofactor is NAD(+).

The catalysed reaction is S-adenosyl-L-homocysteine + H2O = L-homocysteine + adenosine. The protein operates within amino-acid biosynthesis; L-homocysteine biosynthesis; L-homocysteine from S-adenosyl-L-homocysteine: step 1/1. Its function is as follows. Adenosylhomocysteine is a competitive inhibitor of S-adenosyl-L-methionine-dependent methyl transferase reactions; therefore adenosylhomocysteinase may play a key role in the control of methylations via regulation of the intracellular concentration of adenosylhomocysteine. This chain is Adenosylhomocysteinase, found in Trichomonas vaginalis.